The following is a 366-amino-acid chain: uncharacterized protein (366 aa).

Residues 59-222 (LNILHGIGET…LYDTPGIINN (164 aa)) form the CP-type G domain.

The protein belongs to the TRAFAC class YlqF/YawG GTPase family.

In terms of biological role, binds GTP and GDP. This is an uncharacterized protein from Bacillus subtilis (strain 168).